Reading from the N-terminus, the 600-residue chain is MCGIVGFIGEQDAKEILLKGLEKLEYRGYDSAGIAVQAENGVVVYKEKGRIAKLREIVDENVAASVGIGHTRWATHGVPSKVNAHPHQSTSKRFTLVHNGVIENYELVKKEYLQDVTFVSETDTEVIVQLMEQQVSTGLSVEEAFRNTLSLLHGSYAIGLLDAENPNMIYVAKNKSPLLVGVGDNFNVVASDAMAMLQVTDQFIELMDKEIVIVMKESITIKNLQGETIERAPFTAELDASDIEKGTYPHFMLKEIDEQPLVIRNIIQKYQDENGEIELDQDIRNAILDSDRIYIIACGTSYHAGLVGKQFIEKFAKMPVEVHVASEFSYNMPLLTERPFFIYISQSGETADSRAVLVQTNEMGHKALTITNVPGSTLSREADYTLPLYAGPEIAVASTKAYTAQLAVLSILAADIAKAKGEVLGFDLTHELGLVANAMIELCDQKEEMDALAKQFLATTRNCFFIGRSVDFYVGLEGALKLKEISYIQAEGFAGGELKHGTIALIENGTPVIALATQEHVNLGIRGNVKEVVARGANPCIISMKGLEMEGDSFVLPAVHEALAPLVAVIPLQLISYYAALHRECDVDKPRNLAKSVTVE.

Cys-2 serves as the catalytic Nucleophile; for GATase activity. Positions 2 to 217 constitute a Glutamine amidotransferase type-2 domain; sequence CGIVGFIGEQ…DKEIVIVMKE (216 aa). SIS domains follow at residues 283–422 and 452–590; these read IRNA…AKGE and LAKQ…VDKP. Lys-595 (for Fru-6P isomerization activity) is an active-site residue.

Homodimer.

It is found in the cytoplasm. The enzyme catalyses D-fructose 6-phosphate + L-glutamine = D-glucosamine 6-phosphate + L-glutamate. In terms of biological role, catalyzes the first step in hexosamine metabolism, converting fructose-6P into glucosamine-6P using glutamine as a nitrogen source. The chain is Glutamine--fructose-6-phosphate aminotransferase [isomerizing] from Bacillus anthracis.